The primary structure comprises 224 residues: Non-structural protein 3 (224 aa).

The CoV 3a-like viroporin TM domain occupies 34–124; the sequence is NVVPIRQASN…RYKNALFIIF (91 aa). 3 helical membrane passes run 40–60, 69–88, and 95–111; these read QASN…FALF, YIML…LLYY, and ATII…LVCF. The CoV 3a-like viroporin CD domain occupies 128 to 203; the sequence is TLSFLNGKAA…KLYVFSQHQI (76 aa).

It is found in the host membrane. The polypeptide is Non-structural protein 3 (Sus scrofa (Pig)).